The primary structure comprises 637 residues: MTHPPDTIVKSILSHISNPCDIQKLSLQDKLTLAEELRSIIIKTVSNNGGHLAPSLGVIELTLALLATFNPAEDKLLWDVGHQTYAWKLLTGRAHNFSTLRKLNGLSGFPKITESQYDHFGAGHAATSISAALGMAMARDLQGLKHHVIAIIGDGSLTAGMAFEGLNQAGAMGRRLIVVLNDNEMSISKNVGALSLFLSRNMERGWVRRVRHEIKDWLKSIPSIGDEVAEYASRTHRSLKTVFTPGILFEAFRFNYIGPVNGHDIESIEKHLAMAASIDDQPVLLHVLTKKGKGYEPAEKNPASYHGLGAFDIQTGIPKSNSQNSPPTYTEVFGKTLCELAEKDKRIVTITAAMASGTGTSLFKAKFPTHFTDVGICEQHAVTFAAGLASQGYKPFVAIYSTFAQRAYDQIIHDVCIQKLPVTFCLDRAGIVGEDGATHHGAFDISFLRCIPNISILAPRDEAELQSAIYTALSFNSPLAIRYPKGNGVGVTLPNESTPLPFEGELLKEGHDAIIIAIGSMVMPAYSAAQQLQEEKNLSIAVFDSRWISPLPQHQLIELANTFNNILLIEENALAGGFSSAVVELFADNQCLHGQRIQRIGIPNYFIDHGSQKELKQCLLLTVDGIKKMLLQMLQPE.

Residues H82 and 123–125 (GHA) each bind thiamine diphosphate. D154 is a binding site for Mg(2+). Thiamine diphosphate contacts are provided by residues 155–156 (GS), N183, Y295, and E378. N183 is a binding site for Mg(2+).

This sequence belongs to the transketolase family. DXPS subfamily. In terms of assembly, homodimer. Mg(2+) is required as a cofactor. The cofactor is thiamine diphosphate.

It catalyses the reaction D-glyceraldehyde 3-phosphate + pyruvate + H(+) = 1-deoxy-D-xylulose 5-phosphate + CO2. Its pathway is metabolic intermediate biosynthesis; 1-deoxy-D-xylulose 5-phosphate biosynthesis; 1-deoxy-D-xylulose 5-phosphate from D-glyceraldehyde 3-phosphate and pyruvate: step 1/1. Catalyzes the acyloin condensation reaction between C atoms 2 and 3 of pyruvate and glyceraldehyde 3-phosphate to yield 1-deoxy-D-xylulose-5-phosphate (DXP). This chain is 1-deoxy-D-xylulose-5-phosphate synthase, found in Lawsonia intracellularis (strain PHE/MN1-00).